Here is a 383-residue protein sequence, read N- to C-terminus: Paralemmin-1 (383 aa).

Met-1 is modified (N-acetylmethionine). Residues 5–102 (ATDTASQQER…KEIDVLEFGE (98 aa)) adopt a coiled-coil conformation. 3 disordered regions span residues 51-163 (RERW…GSTM), 242-295 (TLSE…GQEP), and 334-375 (ATPR…MKKP). The segment covering 69–96 (DMRKQMQEDEQKARGLEESITRLEKEID) has biased composition (basic and acidic residues). Polar residues-rich tracts occupy residues 109–124 (KENSAAPSPGRPQSAS) and 133–143 (ETLVNAQQTPL). Phosphoserine is present on residues Ser-116, Ser-122, and Ser-124. 3 positions are modified to phosphothreonine: Thr-141, Thr-145, and Thr-153. Ser-157 and Ser-161 each carry phosphoserine. Phosphothreonine is present on Thr-242. A Phosphoserine modification is found at Ser-244. The segment covering 257-273 (GLAEDVTRTTPSRREIT) has biased composition (basic and acidic residues). Over residues 285-295 (GPPGIQPGQEP) the composition is skewed to low complexity. Ser-345 carries the phosphoserine modification. The segment covering 357–367 (QTGPTTTPSDT) has biased composition (polar residues). Phosphothreonine occurs at positions 361, 362, and 363. Residue Ser-365 is modified to Phosphoserine. Thr-367 is modified (phosphothreonine). Residues Cys-377 and Cys-379 are each lipidated (S-palmitoyl cysteine). Cys-380 is modified (cysteine methyl ester). The S-farnesyl cysteine moiety is linked to residue Cys-380. The propeptide at 381-383 (SVM) is removed in mature form.

The protein belongs to the paralemmin family. Interacts with dopamine receptor DRD3. Expression is highest in brain, intermediate in adrenal gland and kidney, and much lower or undetectable in other tissues. Isoform 1 is the predominant isoform in most tissues except brain and kidney where isoform 2 predominates.

The protein resides in the cell membrane. It localises to the cell projection. Its subcellular location is the filopodium membrane. The protein localises to the axon. It is found in the dendrite. The protein resides in the dendritic spine. It localises to the basolateral cell membrane. Its subcellular location is the apicolateral cell membrane. Involved in plasma membrane dynamics and cell process formation. Isoform 1 and isoform 2 are necessary for axonal and dendritic filopodia induction, for dendritic spine maturation and synapse formation in a palmitoylation-dependent manner. The polypeptide is Paralemmin-1 (Palm) (Mus musculus (Mouse)).